Here is a 216-residue protein sequence, read N- to C-terminus: MSITAAQVNELRKITGAGLMDCKKALTETNGDLEQAVDYLRKKGLAAASKKAGRAATEGAVGSYIHAGGKIGVLVEVNCETDFVARNDNFQAFVKDIAMHIAAASPQYVRREEVPAELLEREKEIYRAKARETGKPENIIEKIIEGQINKFYAEICLMEQNFVKDPDKTVQQFLNETISSIGENMSVRRFARFVLGEGLEKKESDFAAEVAAAAGL.

An involved in Mg(2+) ion dislocation from EF-Tu region spans residues 81 to 84; the sequence is TDFV.

Belongs to the EF-Ts family.

Its subcellular location is the cytoplasm. Functionally, associates with the EF-Tu.GDP complex and induces the exchange of GDP to GTP. It remains bound to the aminoacyl-tRNA.EF-Tu.GTP complex up to the GTP hydrolysis stage on the ribosome. This chain is Elongation factor Ts, found in Geobacter sulfurreducens (strain ATCC 51573 / DSM 12127 / PCA).